Reading from the N-terminus, the 171-residue chain is 3-hydroxydecanoyl-[acyl-carrier-protein] dehydratase (171 aa).

The active site involves His-70.

This sequence belongs to the thioester dehydratase family. FabA subfamily. In terms of assembly, homodimer.

Its subcellular location is the cytoplasm. The catalysed reaction is a (3R)-hydroxyacyl-[ACP] = a (2E)-enoyl-[ACP] + H2O. The enzyme catalyses (3R)-hydroxydecanoyl-[ACP] = (2E)-decenoyl-[ACP] + H2O. It catalyses the reaction (2E)-decenoyl-[ACP] = (3Z)-decenoyl-[ACP]. It functions in the pathway lipid metabolism; fatty acid biosynthesis. In terms of biological role, necessary for the introduction of cis unsaturation into fatty acids. Catalyzes the dehydration of (3R)-3-hydroxydecanoyl-ACP to E-(2)-decenoyl-ACP and then its isomerization to Z-(3)-decenoyl-ACP. Can catalyze the dehydratase reaction for beta-hydroxyacyl-ACPs with saturated chain lengths up to 16:0, being most active on intermediate chain length. This Photobacterium profundum (strain SS9) protein is 3-hydroxydecanoyl-[acyl-carrier-protein] dehydratase.